The primary structure comprises 212 residues: MTSAANKRSIMTLFLDKVDIYCHQVRIVLAEKGVAYATEIVDSESISEDLMELNPYGTIPTLVDRDLVLFNSRIIMEYLDERFPHPPLMPVYPVSRGKSRLLMLRIEQDWYPVLEKAEKGSESERAIALKQLKEEILAIAPVFSQSLYFMSEEFRLVDCYIAPLLWRMQQLGVVFTGTGSKAIKSYMERVFQRDSFLQSVGEMTPKNLMEDK.

The 79-residue stretch at 9 to 87 folds into the GST N-terminal domain; the sequence is SIMTLFLDKV…YLDERFPHPP (79 aa). Residues 92 to 212 form the GST C-terminal domain; sequence YPVSRGKSRL…MTPKNLMEDK (121 aa).

It belongs to the GST superfamily. HSP26 family.

Functionally, forms an equimolar complex with the RNA polymerase holoenzyme (RNAP) but not with the core enzyme. The protein is Stringent starvation protein A homolog (sspA) of Histophilus somni (Haemophilus somnus).